Reading from the N-terminus, the 210-residue chain is MKIVEVRHPLVQHKIGLLRDAALSTKGFRELVTELGTLLAYEATANLDTESHTQPGWAGPVTVQRIAGAKITLVPILRAGLGMLPGVLALIPAARVSVVGLQRDEETLQPVPYFERLTGRLEERDALILDPMLATGGTLIATIDMLKRAGARRIKGIFLVAAPEGLKALEAAHPDVEVYTAAIDDHLNDKGYILPGLGDAGDRIFGTRLE.

5-phospho-alpha-D-ribose 1-diphosphate contacts are provided by residues R78, R103, and 130 to 138; that span reads DPMLATGGT. Uracil-binding positions include I193 and 198–200; that span reads GDA. Residue D199 participates in 5-phospho-alpha-D-ribose 1-diphosphate binding.

It belongs to the UPRTase family. The cofactor is Mg(2+).

The enzyme catalyses UMP + diphosphate = 5-phospho-alpha-D-ribose 1-diphosphate + uracil. The protein operates within pyrimidine metabolism; UMP biosynthesis via salvage pathway; UMP from uracil: step 1/1. Its activity is regulated as follows. Allosterically activated by GTP. Functionally, catalyzes the conversion of uracil and 5-phospho-alpha-D-ribose 1-diphosphate (PRPP) to UMP and diphosphate. The sequence is that of Uracil phosphoribosyltransferase from Xanthomonas axonopodis pv. citri (strain 306).